Consider the following 223-residue polypeptide: Triosephosphate isomerase (223 aa).

6–8 (NLK) contributes to the substrate binding site. Histidine 86 serves as the catalytic Electrophile. The Proton acceptor role is filled by glutamate 151. Substrate contacts are provided by glycine 157 and serine 187.

It belongs to the triosephosphate isomerase family. In terms of assembly, homodimer.

It is found in the cytoplasm. The catalysed reaction is D-glyceraldehyde 3-phosphate = dihydroxyacetone phosphate. Its pathway is carbohydrate biosynthesis; gluconeogenesis. It functions in the pathway carbohydrate degradation; glycolysis; D-glyceraldehyde 3-phosphate from glycerone phosphate: step 1/1. Involved in the gluconeogenesis. Catalyzes stereospecifically the conversion of dihydroxyacetone phosphate (DHAP) to D-glyceraldehyde-3-phosphate (G3P). The chain is Triosephosphate isomerase from Campylobacter jejuni subsp. doylei (strain ATCC BAA-1458 / RM4099 / 269.97).